The chain runs to 283 residues: 4-hydroxy-3-methylbut-2-enyl diphosphate reductase (283 aa).

Position 12 (Cys12) interacts with [4Fe-4S] cluster. (2E)-4-hydroxy-3-methylbut-2-enyl diphosphate is bound by residues His40 and His72. Dimethylallyl diphosphate is bound by residues His40 and His72. Isopentenyl diphosphate contacts are provided by His40 and His72. Cys94 is a binding site for [4Fe-4S] cluster. A (2E)-4-hydroxy-3-methylbut-2-enyl diphosphate-binding site is contributed by His122. His122 contacts dimethylallyl diphosphate. His122 contacts isopentenyl diphosphate. Glu124 functions as the Proton donor in the catalytic mechanism. Thr160 contributes to the (2E)-4-hydroxy-3-methylbut-2-enyl diphosphate binding site. Cys188 is a [4Fe-4S] cluster binding site. Positions 216, 218, and 259 each coordinate (2E)-4-hydroxy-3-methylbut-2-enyl diphosphate. Dimethylallyl diphosphate contacts are provided by Ser216, Asn218, and Ser259. Isopentenyl diphosphate contacts are provided by Ser216, Asn218, and Ser259.

It belongs to the IspH family. Requires [4Fe-4S] cluster as cofactor.

It catalyses the reaction isopentenyl diphosphate + 2 oxidized [2Fe-2S]-[ferredoxin] + H2O = (2E)-4-hydroxy-3-methylbut-2-enyl diphosphate + 2 reduced [2Fe-2S]-[ferredoxin] + 2 H(+). The enzyme catalyses dimethylallyl diphosphate + 2 oxidized [2Fe-2S]-[ferredoxin] + H2O = (2E)-4-hydroxy-3-methylbut-2-enyl diphosphate + 2 reduced [2Fe-2S]-[ferredoxin] + 2 H(+). It participates in isoprenoid biosynthesis; dimethylallyl diphosphate biosynthesis; dimethylallyl diphosphate from (2E)-4-hydroxy-3-methylbutenyl diphosphate: step 1/1. It functions in the pathway isoprenoid biosynthesis; isopentenyl diphosphate biosynthesis via DXP pathway; isopentenyl diphosphate from 1-deoxy-D-xylulose 5-phosphate: step 6/6. In terms of biological role, catalyzes the conversion of 1-hydroxy-2-methyl-2-(E)-butenyl 4-diphosphate (HMBPP) into a mixture of isopentenyl diphosphate (IPP) and dimethylallyl diphosphate (DMAPP). Acts in the terminal step of the DOXP/MEP pathway for isoprenoid precursor biosynthesis. The protein is 4-hydroxy-3-methylbut-2-enyl diphosphate reductase of Dictyoglomus turgidum (strain DSM 6724 / Z-1310).